Consider the following 231-residue polypeptide: 7-cyano-7-deazaguanine synthase (231 aa).

8–18 (FSGGQDSTTCL) lines the ATP pocket. Residues Cys188, Cys197, Cys200, and Cys203 each coordinate Zn(2+).

The protein belongs to the QueC family. Zn(2+) serves as cofactor.

It carries out the reaction 7-carboxy-7-deazaguanine + NH4(+) + ATP = 7-cyano-7-deazaguanine + ADP + phosphate + H2O + H(+). Its pathway is purine metabolism; 7-cyano-7-deazaguanine biosynthesis. In terms of biological role, catalyzes the ATP-dependent conversion of 7-carboxy-7-deazaguanine (CDG) to 7-cyano-7-deazaguanine (preQ(0)). This Salmonella paratyphi A (strain ATCC 9150 / SARB42) protein is 7-cyano-7-deazaguanine synthase.